Consider the following 1867-residue polypeptide: TATA-binding protein-associated factor MOT1 (1867 aa).

Ser93 bears the Phosphoserine mark. A disordered region spans residues 169-228 (KTDDIKQETSMLNASDKANENKSNANKKSARMLAMARRKKKMSAKNTPKHPVDITESSVS). Low complexity predominate over residues 181 to 203 (NASDKANENKSNANKKSARMLAM). The Nuclear localization signal motif lies at 195–211 (KKSARMLAMARRKKKMS). HEAT repeat units follow at residues 289 to 326 (WQFQGIYELLLDNLMSENWEIRHGAALGLRELVKKHAY), 445 to 482 (GLLENVVRIVLYGLNQSDDDVQSVAASILTPITSEFVK), and 541 to 578 (WSFKSLVPKLYPFLRHSISSVRRAVLNLLIAFLSIKDD). A Phosphoserine modification is found at Ser677. HEAT repeat units follow at residues 1108–1145 (SEVFTRFPVLLTFLRSNLSVFRYSAARTFADLAKISSV) and 1188–1225 (PYVIFLIVPLLGRMSDSNEDVRNLATTTFASIIKLVPL). The 174-residue stretch at 1284-1457 (AFLNKYHLHG…WSLFDFLMPG (174 aa)) folds into the Helicase ATP-binding domain. 1297–1304 (DDMGLGKT) contributes to the ATP binding site. The DEGH box motif lies at 1408-1411 (DEGH). Residues 1495–1537 (ALHKQVLPFMLRRLKEDVLSDLPPKIIQDYYCELGDLQKQLYM) form an HEAT 6 repeat. One can recognise a Helicase C-terminal domain in the interval 1639 to 1787 (PIQNVISQHR…STVVNQQNSG (149 aa)). Positions 1802-1822 (PDNVTSQDNEEKNNGDSQAAK) are disordered.

This sequence belongs to the SNF2/RAD54 helicase family. Forms a complex with TBP which binds TATA DNA with high affinity but with altered specificity.

Its subcellular location is the mitochondrion. The protein resides in the nucleus. Regulates transcription in association with TATA binding protein (TBP). Removes TBP from the TATA box via its C-terminal ATPase activity. Both transcription activation and repression require its ATPase activity. This chain is TATA-binding protein-associated factor MOT1 (MOT1), found in Saccharomyces cerevisiae (strain ATCC 204508 / S288c) (Baker's yeast).